A 537-amino-acid chain; its full sequence is Interleukin-2 receptor subunit beta (537 aa).

The signal sequence occupies residues 1 to 26; the sequence is MATVDLSWRLPLYILLLLLATTWVSA. Over 27 to 239 the chain is Extracellular; it reads AVNDCSHLKC…FRTRPADPKE (213 aa). An intrachain disulfide couples cysteine 36 to cysteine 46. Asparagine 43, asparagine 55, and asparagine 71 each carry an N-linked (GlcNAc...) asparagine glycan. Cysteine 74 and cysteine 86 are joined by a disulfide. One can recognise a Fibronectin type-III domain in the interval 135 to 235; that stretch reads APHSLQVLHI…QPMAFRTRPA (101 aa). The N-linked (GlcNAc...) asparagine glycan is linked to asparagine 150. The WSXWS motif signature appears at 221–225; that stretch reads WSPWS. Residues 240–267 traverse the membrane as a helical segment; sequence IFPLPWLRCLLLVLGCFFGFLSCVCVLV. Residues 268-537 are Cytoplasmic-facing; that stretch reads KCRYLGPWLK…LQAQDSAHLI (270 aa). The Box 1 motif motif lies at 280-288; it reads LKCHIPDPS. Disordered regions lie at residues 442–466 and 479–498; these read AYGN…SLAS and ELGD…QASV. A compositionally biased stretch (polar residues) spans 487 to 497; it reads MSTNSSGQQAS.

This sequence belongs to the type I cytokine receptor family. Type 4 subfamily. Non-covalent dimer of an alpha and a beta subunit. IL2R exists in 3 different forms: a high affinity dimer, an intermediate affinity monomer (beta subunit), and a low affinity monomer (alpha subunit). The high and intermediate affinity forms also associate with a gamma subunit. Interacts with SHB upon interleukin stimulation.

It localises to the cell membrane. The protein localises to the cell surface. In terms of biological role, receptor for interleukin-2. This beta subunit is involved in receptor mediated endocytosis and transduces the mitogenic signals of IL2. Probably in association with IL15RA, involved in the stimulation of neutrophil phagocytosis by IL15. In Rattus norvegicus (Rat), this protein is Interleukin-2 receptor subunit beta (Il2rb).